A 475-amino-acid chain; its full sequence is UDP-N-acetylmuramate--L-alanine ligase (475 aa).

118–124 (GTHGKTT) is a binding site for ATP.

The protein belongs to the MurCDEF family.

The protein resides in the cytoplasm. It carries out the reaction UDP-N-acetyl-alpha-D-muramate + L-alanine + ATP = UDP-N-acetyl-alpha-D-muramoyl-L-alanine + ADP + phosphate + H(+). The protein operates within cell wall biogenesis; peptidoglycan biosynthesis. Its function is as follows. Cell wall formation. The protein is UDP-N-acetylmuramate--L-alanine ligase of Paracoccus denitrificans (strain Pd 1222).